A 503-amino-acid chain; its full sequence is Cytochrome P450 3A7 (503 aa).

Cys442 provides a ligand contact to heme.

It belongs to the cytochrome P450 family. The cofactor is heme. As to expression, expressed in fetal liver (at protein level).

The protein resides in the endoplasmic reticulum membrane. The protein localises to the microsome membrane. The enzyme catalyses an organic molecule + reduced [NADPH--hemoprotein reductase] + O2 = an alcohol + oxidized [NADPH--hemoprotein reductase] + H2O + H(+). It catalyses the reaction 3beta-hydroxyandrost-5-en-17-one + reduced [NADPH--hemoprotein reductase] + O2 = 3beta,16alpha-dihydroxy-androst-5-en-17-one + oxidized [NADPH--hemoprotein reductase] + H2O + H(+). It carries out the reaction dehydroepiandrosterone 3-sulfate + reduced [NADPH--hemoprotein reductase] + O2 = 16alpha-hydroxydehydroepiandrosterone 3-sulfate + oxidized [NADPH--hemoprotein reductase] + H2O + H(+). The catalysed reaction is testosterone + reduced [NADPH--hemoprotein reductase] + O2 = 6beta,17beta-dihydroxyandrost-4-en-3-one + oxidized [NADPH--hemoprotein reductase] + H2O + H(+). The enzyme catalyses estrone + reduced [NADPH--hemoprotein reductase] + O2 = 2-hydroxyestrone + oxidized [NADPH--hemoprotein reductase] + H2O + H(+). It catalyses the reaction estrone + reduced [NADPH--hemoprotein reductase] + O2 = 4-hydroxyestrone + oxidized [NADPH--hemoprotein reductase] + H2O + H(+). It carries out the reaction estrone + reduced [NADPH--hemoprotein reductase] + O2 = 16alpha-hydroxyestrone + oxidized [NADPH--hemoprotein reductase] + H2O + H(+). The catalysed reaction is 17beta-estradiol + reduced [NADPH--hemoprotein reductase] + O2 = 2-hydroxy-17beta-estradiol + oxidized [NADPH--hemoprotein reductase] + H2O + H(+). The enzyme catalyses 17beta-estradiol + reduced [NADPH--hemoprotein reductase] + O2 = 6beta-hydroxyestradiol-17beta + oxidized [NADPH--hemoprotein reductase] + H2O + H(+). It catalyses the reaction all-trans-retinoate + reduced [NADPH--hemoprotein reductase] + O2 = all-trans-4-hydroxyretinoate + oxidized [NADPH--hemoprotein reductase] + H2O + H(+). It carries out the reaction all-trans-retinoate + reduced [NADPH--hemoprotein reductase] + O2 = all-trans-18-hydroxyretinoate + oxidized [NADPH--hemoprotein reductase] + H2O + H(+). It functions in the pathway steroid hormone biosynthesis. Its pathway is cofactor metabolism; retinol metabolism. In terms of biological role, a cytochrome P450 monooxygenase involved in the metabolism of steroid hormones and vitamins during embryogenesis. Mechanistically, uses molecular oxygen inserting one oxygen atom into a substrate, and reducing the second into a water molecule, with two electrons provided by NADPH via cytochrome P450 reductase (NADPH--hemoprotein reductase). Catalyzes the hydroxylation of carbon-hydrogen bonds. Metabolizes 3beta-hydroxyandrost-5-en-17-one (dehydroepiandrosterone, DHEA), a precursor in the biosynthesis of androgen and estrogen steroid hormones. Exhibits high catalytic activity for the formation of hydroxyestrogens from estrone (E1), particularly D-ring hydroxylated estrone at the C16-alpha position. Mainly hydroxylates all trans-retinoic acid (atRA) to 4-hydroxyretinoate and may play a role in atRA clearance during fetal development. Also involved in the oxidative metabolism of xenobiotics including anticonvulsants. The sequence is that of Cytochrome P450 3A7 from Homo sapiens (Human).